The primary structure comprises 61 residues: Bacteriocin leucocin-A (61 aa).

Residues 1 to 24 (MMNMKPTESYEQLDNSALEQVVGG) constitute a propeptide that is removed on maturation. C33 and C38 are oxidised to a cystine.

This sequence belongs to the bacteriocin class IIA/YGNGV family.

It localises to the secreted. Inhibits a wide spectrum of lactic acid bacteria. The protein is Bacteriocin leucocin-A (lcnA) of Leuconostoc gelidum.